The sequence spans 420 residues: Glutamyl-tRNA reductase (420 aa).

Substrate is bound by residues 49–52 (TCNR), S109, 114–116 (EPQ), and Q120. The active-site Nucleophile is the C50. 189–194 (GAGETI) contacts NADP(+).

This sequence belongs to the glutamyl-tRNA reductase family. As to quaternary structure, homodimer.

It carries out the reaction (S)-4-amino-5-oxopentanoate + tRNA(Glu) + NADP(+) = L-glutamyl-tRNA(Glu) + NADPH + H(+). It functions in the pathway porphyrin-containing compound metabolism; protoporphyrin-IX biosynthesis; 5-aminolevulinate from L-glutamyl-tRNA(Glu): step 1/2. Functionally, catalyzes the NADPH-dependent reduction of glutamyl-tRNA(Glu) to glutamate 1-semialdehyde (GSA). The protein is Glutamyl-tRNA reductase of Edwardsiella ictaluri (strain 93-146).